Here is a 292-residue protein sequence, read N- to C-terminus: 4-hydroxy-tetrahydrodipicolinate synthase (292 aa).

Thr-45 lines the pyruvate pocket. Residue Tyr-133 is the Proton donor/acceptor of the active site. Lys-161 functions as the Schiff-base intermediate with substrate in the catalytic mechanism. Ile-203 contributes to the pyruvate binding site.

This sequence belongs to the DapA family. In terms of assembly, homotetramer; dimer of dimers.

The protein resides in the cytoplasm. The enzyme catalyses L-aspartate 4-semialdehyde + pyruvate = (2S,4S)-4-hydroxy-2,3,4,5-tetrahydrodipicolinate + H2O + H(+). It participates in amino-acid biosynthesis; L-lysine biosynthesis via DAP pathway; (S)-tetrahydrodipicolinate from L-aspartate: step 3/4. Functionally, catalyzes the condensation of (S)-aspartate-beta-semialdehyde [(S)-ASA] and pyruvate to 4-hydroxy-tetrahydrodipicolinate (HTPA). In Shigella dysenteriae serotype 1 (strain Sd197), this protein is 4-hydroxy-tetrahydrodipicolinate synthase.